The primary structure comprises 204 residues: Large ribosomal subunit protein eL15y (204 aa).

The disordered stretch occupies residues 162 to 204; sequence RGLTSEGKKNRGLRGKGHNNHKNRPSRRATWKKNNSISLRRYR. The segment covering 171–192 has biased composition (basic residues); that stretch reads NRGLRGKGHNNHKNRPSRRATW. Residues 193-204 are compositionally biased toward polar residues; that stretch reads KKNNSISLRRYR.

The protein belongs to the eukaryotic ribosomal protein eL15 family.

This Arabidopsis thaliana (Mouse-ear cress) protein is Large ribosomal subunit protein eL15y (RPL15B).